The following is a 309-amino-acid chain: Dicarboxylate carrier UCP2 (309 aa).

The Mitochondrial intermembrane segment spans residues 1–16; it reads MVGFKATDVPPTATVK. Solcar repeat units follow at residues 11 to 106, 114 to 203, and 212 to 297; these read PTAT…VKQF, ASIG…IKDA, and DDLP…LKRA. Positions 16-63 are important for interaction with long-chain fatty acids; sequence KFLGAGTAACIADLITFPLDTAKVRLQIQGESQGPVHATASAQYRGVM. A helical transmembrane segment spans residues 17-40; sequence FLGAGTAACIADLITFPLDTAKVR. At 41–77 the chain is on the mitochondrial matrix side; it reads LQIQGESQGPVHATASAQYRGVMGTILTMVRTEGPRS. A helical membrane pass occupies residues 78-103; that stretch reads LYNGLVAGLQRQMSFASVRIGLYDSV. The Mitochondrial intermembrane segment spans residues 104–119; it reads KQFYTKGSEHASIGSR. The helical transmembrane segment at 120–145 threads the bilayer; the sequence is LLAGSTTGALAVAVAQPTDVVKVRFQ. The Mitochondrial matrix portion of the chain corresponds to 146–173; that stretch reads AQARAGGGRRYQSTVNAYKTIAREEGFR. The helical transmembrane segment at 174–199 threads the bilayer; the sequence is GLWKGTSPNVARNAIVNCAELVTYDL. At 200 to 217 the chain is on the mitochondrial intermembrane side; that stretch reads IKDALLKANLMTDDLPCH. The helical transmembrane segment at 218–242 threads the bilayer; the sequence is FTSAFGAGFCTTVIASPVDVVKTRY. Over 243–268 the chain is Mitochondrial matrix; it reads MNSALGQYSSAGHCALTMLQKEGPRA. The helical transmembrane segment at 269–294 threads the bilayer; sequence FYKGFMPSFLRLGSWNVVMFVTYEQL. The tract at residues 278-285 is important for interaction with long-chain fatty acids; that stretch reads LRLGSWNV. Residues 295–309 are Mitochondrial intermembrane-facing; it reads KRALMAACTSREAPF.

Belongs to the mitochondrial carrier (TC 2.A.29) family. In terms of assembly, homotetramer. Adopts an asymmetrical dimer of dimers functional form. Interacts with MICU1 (when methylated); leading to decrease the calcium sensitivity of MICU1.

Its subcellular location is the mitochondrion inner membrane. It carries out the reaction L-aspartate(out) + phosphate(in) + H(+)(in) = L-aspartate(in) + phosphate(out) + H(+)(out). It catalyses the reaction oxaloacetate(out) + phosphate(in) + H(+)(in) = oxaloacetate(in) + phosphate(out) + H(+)(out). The catalysed reaction is (S)-malate(out) + phosphate(in) + H(+)(in) = (S)-malate(in) + phosphate(out) + H(+)(out). The enzyme catalyses malonate(out) + phosphate(in) + H(+)(in) = malonate(in) + phosphate(out) + H(+)(out). It carries out the reaction sulfate(out) + phosphate(in) + H(+)(in) = sulfate(in) + phosphate(out) + H(+)(out). It catalyses the reaction (S)-malate(out) = (S)-malate(in). The catalysed reaction is L-aspartate(out) = L-aspartate(in). The enzyme catalyses phosphate(in) = phosphate(out). It carries out the reaction chloride(in) = chloride(out). It catalyses the reaction H(+)(in) = H(+)(out). The catalysed reaction is a long-chain fatty acid(out) = a long-chain fatty acid(in). In terms of biological role, antiporter that exports dicarboxylate intermediates of the Krebs cycle in exchange for phosphate plus a proton across the inner membrane of mitochondria, a process driven by mitochondrial motive force with an overall impact on glycolysis, glutaminolysis and glutathione-dependent redox balance. Continuous export of oxaloacetate and related four-carbon dicarboxylates from mitochondrial matrix into the cytosol negatively regulates the oxidation of acetyl-CoA substrates via the Krebs cycle lowering the ATP/ADP ratio and reactive oxygen species (ROS) production. May mediate inducible proton entry into the mitochondrial matrix affecting ATP turnover as a protection mechanism against oxidative stress. The proton currents are most likely associated with fatty acid flipping across the inner membrane of mitochondria in a metabolic process regulated by free fatty acids and purine nucleotides. Regulates the use of glucose as a source of energy. Required for glucose-induced DRP1-dependent mitochondrial fission and neuron activation in the ventromedial nucleus of the hypothalamus (VMH). This mitochondrial adaptation mechanism modulates the VMH pool of glucose-excited neurons with an impact on systemic glucose homeostasis. Regulates ROS levels and metabolic reprogramming of macrophages during the resolution phase of inflammation. Attenuates ROS production in response to IL33 to preserve the integrity of the Krebs cycle required for persistent production of itaconate and subsequent GATA3-dependent differentiation of inflammation-resolving alternatively activated macrophages. Can unidirectionally transport anions including L-malate, L-aspartate, phosphate and chloride ions. Does not mediate adaptive thermogenesis. This chain is Dicarboxylate carrier UCP2 (UCP2), found in Pongo abelii (Sumatran orangutan).